Here is a 185-residue protein sequence, read N- to C-terminus: Large ribosomal subunit protein uL5 (185 aa).

The protein belongs to the universal ribosomal protein uL5 family. Part of the 50S ribosomal subunit; part of the 5S rRNA/L5/L18/L25 subcomplex. Contacts the 5S rRNA and the P site tRNA. Forms a bridge to the 30S subunit in the 70S ribosome.

This is one of the proteins that bind and probably mediate the attachment of the 5S RNA into the large ribosomal subunit, where it forms part of the central protuberance. In the 70S ribosome it contacts protein S13 of the 30S subunit (bridge B1b), connecting the 2 subunits; this bridge is implicated in subunit movement. Contacts the P site tRNA; the 5S rRNA and some of its associated proteins might help stabilize positioning of ribosome-bound tRNAs. The protein is Large ribosomal subunit protein uL5 of Phocaeicola vulgatus (strain ATCC 8482 / DSM 1447 / JCM 5826 / CCUG 4940 / NBRC 14291 / NCTC 11154) (Bacteroides vulgatus).